We begin with the raw amino-acid sequence, 388 residues long: MAESNFVDYVKIYCRSGKGGRGSTHMRREKYTPNGGPDGGDGGRGGHVILRGNRNYWTLLHLRYDRHAMAGHGESGSKNRSFGKDGADKIIEVPCGTVVYNAETGEYVCDVTEHGQEVILLKGGRGGLGNWHFKTATRQAPRFAQPGEPMQEMTVILELKLLADVGLVGFPNAGKSTLLSAISAAKPKIADYPFTTLEPNLGIVSYRDGQSFVMADIPGIIEGASEGKGLGLRFLRHIERNSLLLFMIPADSDDIRKDYEVLLNELKTFNPEMLDKQRVLAITKSDMLDQELMDEIEPTLPEGIPHVFISSVSGLGISVLKDILWTELNKESNKIEAIVHRPKDVSRLQQELKDMGEDEELDYEYEDDGDGDEDDLDYEYEEEDWEDK.

Residues 4-162 form the Obg domain; sequence SNFVDYVKIY…MTVILELKLL (159 aa). The interval 18–45 is disordered; that stretch reads KGGRGSTHMRREKYTPNGGPDGGDGGRG. Over residues 36–45 the composition is skewed to gly residues; sequence GPDGGDGGRG. In terms of domain architecture, OBG-type G spans 163–329; that stretch reads ADVGLVGFPN…LKDILWTELN (167 aa). Residues 169 to 176, 194 to 198, 216 to 219, 283 to 286, and 310 to 312 each bind GTP; these read GFPNAGKS, FTTLE, DIPG, TKSD, and SSV. Mg(2+)-binding residues include Ser176 and Thr196. The interval 352-388 is disordered; that stretch reads LKDMGEDEELDYEYEDDGDGDEDDLDYEYEEEDWEDK. Acidic residues predominate over residues 356–388; sequence GEDEELDYEYEDDGDGDEDDLDYEYEEEDWEDK.

The protein belongs to the TRAFAC class OBG-HflX-like GTPase superfamily. OBG GTPase family. As to quaternary structure, monomer. Requires Mg(2+) as cofactor.

It is found in the cytoplasm. In terms of biological role, an essential GTPase which binds GTP, GDP and possibly (p)ppGpp with moderate affinity, with high nucleotide exchange rates and a fairly low GTP hydrolysis rate. Plays a role in control of the cell cycle, stress response, ribosome biogenesis and in those bacteria that undergo differentiation, in morphogenesis control. The sequence is that of GTPase Obg from Bacteroides fragilis (strain ATCC 25285 / DSM 2151 / CCUG 4856 / JCM 11019 / LMG 10263 / NCTC 9343 / Onslow / VPI 2553 / EN-2).